Consider the following 1061-residue polypeptide: NACHT, LRR and PYD domains-containing protein 12 (1061 aa).

The Pyrin domain occupies 1–95 (MLRTAGRDGL…WERGQREDLV (95 aa)). Residues 129 to 201 (YRDYVRRKFR…SPIKIETLFE (73 aa)) enclose the FISNA domain. Positions 211–528 (RTVVMQGAAG…EFFAAMYYIL (318 aa)) constitute an NACHT domain. ATP is bound at residue 217–224 (GAAGIGKS). LRR repeat units lie at residues 828–848 (HLVE…RLLC), 857–878 (RLRT…ELAS), 885–906 (SLRE…LLCE), 914–935 (KLQT…GLSV), 942–962 (NLRE…WLLA), 971–992 (RLQK…NLYF), 999–1020 (TLTD…LLCK), and 1028–1049 (KLRV…RLAA).

The protein belongs to the NLRP family. Interacts (via pyrin domain) with ASC. Interacts (via pyrin domain) with FAF1 (via UBA domain). Interacts with MAP3K14; this interaction promotes proteasomal degradation of MAP3K14. Interacts with NOD2; this interaction promotes degradation of NOD2 through the ubiquitin-proteasome pathway. Interacts with HSPA1A and HSPA8. Interacts with HSP90AA1. Interacts with TRIM25; this interaction inhibits RIGI-mediated signaling pathway. Detected only in peripheral blood leukocytes, predominantly in eosinophils and granulocytes, and at lower levels in monocytes.

It is found in the cytoplasm. In terms of biological role, plays an essential role as an potent mitigator of inflammation. Primarily expressed in dendritic cells and macrophages, inhibits both canonical and non-canonical NF-kappa-B and ERK activation pathways. Functions as a negative regulator of NOD2 by targeting it to degradation via the proteasome pathway. In turn, promotes bacterial tolerance. Also inhibits the RIGI-mediated immune signaling against RNA viruses by reducing the E3 ubiquitin ligase TRIM25-mediated 'Lys-63'-linked RIGI activation but enhancing the E3 ubiquitin ligase RNF125-mediated 'Lys-48'-linked RIGI degradation. Also acts as a negative regulator of inflammatory response to mitigate obesity and obesity-associated diseases in adipose tissue. The protein is NACHT, LRR and PYD domains-containing protein 12 (NLRP12) of Homo sapiens (Human).